The following is a 128-amino-acid chain: Large ribosomal subunit protein bL17 (128 aa).

The protein belongs to the bacterial ribosomal protein bL17 family. As to quaternary structure, part of the 50S ribosomal subunit. Contacts protein L32.

This is Large ribosomal subunit protein bL17 from Streptococcus pneumoniae serotype 4 (strain ATCC BAA-334 / TIGR4).